Consider the following 60-residue polypeptide: uncharacterized protein (60 aa).

A helical membrane pass occupies residues 38-58; that stretch reads SILAGGIIPVLFFFPLFLFLY.

It is found in the membrane. This is an uncharacterized protein from Saccharomyces cerevisiae (strain ATCC 204508 / S288c) (Baker's yeast).